The chain runs to 277 residues: 3-methyl-2-oxobutanoate hydroxymethyltransferase (277 aa).

2 residues coordinate Mg(2+): aspartate 54 and aspartate 93. 3-methyl-2-oxobutanoate is bound by residues 54–55 (DS), aspartate 93, and lysine 122. Mg(2+) is bound at residue glutamate 124. Residue glutamate 191 is the Proton acceptor of the active site.

Belongs to the PanB family. In terms of assembly, homodecamer; pentamer of dimers. The cofactor is Mg(2+).

Its subcellular location is the cytoplasm. It carries out the reaction 3-methyl-2-oxobutanoate + (6R)-5,10-methylene-5,6,7,8-tetrahydrofolate + H2O = 2-dehydropantoate + (6S)-5,6,7,8-tetrahydrofolate. The protein operates within cofactor biosynthesis; (R)-pantothenate biosynthesis; (R)-pantoate from 3-methyl-2-oxobutanoate: step 1/2. Catalyzes the reversible reaction in which hydroxymethyl group from 5,10-methylenetetrahydrofolate is transferred onto alpha-ketoisovalerate to form ketopantoate. This Alkalilimnicola ehrlichii (strain ATCC BAA-1101 / DSM 17681 / MLHE-1) protein is 3-methyl-2-oxobutanoate hydroxymethyltransferase.